Reading from the N-terminus, the 238-residue chain is Phosphoribosylaminoimidazole-succinocarboxamide synthase (238 aa).

The protein belongs to the SAICAR synthetase family.

The catalysed reaction is 5-amino-1-(5-phospho-D-ribosyl)imidazole-4-carboxylate + L-aspartate + ATP = (2S)-2-[5-amino-1-(5-phospho-beta-D-ribosyl)imidazole-4-carboxamido]succinate + ADP + phosphate + 2 H(+). It participates in purine metabolism; IMP biosynthesis via de novo pathway; 5-amino-1-(5-phospho-D-ribosyl)imidazole-4-carboxamide from 5-amino-1-(5-phospho-D-ribosyl)imidazole-4-carboxylate: step 1/2. The polypeptide is Phosphoribosylaminoimidazole-succinocarboxamide synthase (Desulfitobacterium hafniense (strain Y51)).